We begin with the raw amino-acid sequence, 298 residues long: MSVLNVLESHVILHIIEFLPDHEKIKFMSTCKSLYEFRCHVTYNNFYVYDTINHLDFVNKFKKLIYLSIFNENSKNYDPTIIVKSIKDVIPPNTKCIIFDDDFDEDITEFIPEGIKYVVFGIHFNKPIKKILPNSIIHLILGFSFNQSISDILPCGLIELTLGHNFRQSINDIPNTITKLIFDSEFIPEIHGKIPTNINCLGIRGYFGKNHKKDIPNNIKHLIIGTDYHSKMCEVIEDSIDMIITENMTHITLGWNFDDTTFNIPNGVTHLILYQKFNPTIIKCLPSSVEHVEFISRW.

One can recognise an F-box domain in the interval 4–48; the sequence is LNVLESHVILHIIEFLPDHEKIKFMSTCKSLYEFRCHVTYNNFYV. FNIP repeat units lie at residues 124–165 and 255–297; these read FNKP…LGHN and WNFD…FISR.

This chain is Putative F-box and FNIP repeat-containing protein R286, found in Acanthamoeba polyphaga (Amoeba).